The primary structure comprises 318 residues: MSFLLFITLGLSLTALSHCVQVTIQNPIINVTSGQNATLYCTYILNNQNKNNLVIQWNIFQAKSQNQETVFFYQNGQSLSGPSYKNRVTAAMSPGNATITISNMQSQDTGIYTCEVLNLPESSGQGKILLTVLVPPSVPHCSIRGAVETGHFISLLCYSEEGMPRPIYSWNRVENGLLKSTPSQMNQQKGSLIIGNLTDFEEGYYRCTASNNLGNATCELNLHTGGEGGVIAAAVIGGLLAAAIIIAIVWFLVVKRKQKKQLPPTKEMKTGGNQYMAVSGEANEPPKENLGASEPTETIQFHDHAENAANGETEEPTA.

The first 19 residues, 1-19 (MSFLLFITLGLSLTALSHC), serve as a signal peptide directing secretion. The region spanning 20–131 (VQVTIQNPII…SSGQGKILLT (112 aa)) is the Ig-like V-type domain. Residues 20–233 (VQVTIQNPII…TGGEGGVIAA (214 aa)) are Extracellular-facing. Cystine bridges form between C41/C114 and C157/C207. In terms of domain architecture, Ig-like C2-type spans 136-223 (PSVPHCSIRG…GNATCELNLH (88 aa)). Residues 234–254 (AVIGGLLAAAIIIAIVWFLVV) form a helical membrane-spanning segment. Topologically, residues 255–318 (KRKQKKQLPP…ANGETEEPTA (64 aa)) are cytoplasmic. The interval 261-318 (QLPPTKEMKTGGNQYMAVSGEANEPPKENLGASEPTETIQFHDHAENAANGETEEPTA) is disordered.

Expressed in thymocytes.

The protein localises to the membrane. In Xenopus laevis (African clawed frog), this protein is V-set and immunoglobulin domain-containing protein 1 (vsig1).